Here is a 288-residue protein sequence, read N- to C-terminus: Fe-S cluster assembly protein dre2 (288 aa).

The interval 1–127 (MSSSVLVLTS…LSRPNQVEAV (127 aa)) is N-terminal SAM-like domain. The tract at residues 128–177 (PIKLSNKNGQSASKNKILDFLKSDKENLISGDDDQELIDEDELLDESAHD) is linker. C185, C196, C199, and C201 together coordinate [2Fe-2S] cluster. The fe-S binding site A stretch occupies residues 185–201 (CKPEPGKKKRACKNCTC). [4Fe-4S] cluster-binding residues include C244, C247, C255, and C258. 2 short sequence motifs (cx2C motif) span residues 244–247 (CGNC) and 255–258 (CSGC). A fe-S binding site B region spans residues 244-258 (CGNCYLGDAFRCSGC).

It belongs to the anamorsin family. As to quaternary structure, monomer. Interacts with tah18. Interacts with tim40. Requires [2Fe-2S] cluster as cofactor. The cofactor is [4Fe-4S] cluster.

The protein resides in the cytoplasm. It localises to the mitochondrion intermembrane space. In terms of biological role, component of the cytosolic iron-sulfur (Fe-S) protein assembly (CIA) machinery required for the maturation of extramitochondrial Fe-S proteins. Part of an electron transfer chain functioning in an early step of cytosolic Fe-S biogenesis, facilitating the de novo assembly of a [4Fe-4S] cluster on the scaffold complex cfd1-nbp35. Electrons are transferred to dre2 from NADPH via the FAD- and FMN-containing protein tah18. Tah18-dre2 are also required for the assembly of the diferric tyrosyl radical cofactor of ribonucleotide reductase (RNR), probably by providing electrons for reduction during radical cofactor maturation in the catalytic small subunit suc22. The polypeptide is Fe-S cluster assembly protein dre2 (Schizosaccharomyces pombe (strain 972 / ATCC 24843) (Fission yeast)).